Here is a 187-residue protein sequence, read N- to C-terminus: UPF0301 protein Sputcn32_2681 (187 aa).

Belongs to the UPF0301 (AlgH) family.

This chain is UPF0301 protein Sputcn32_2681, found in Shewanella putrefaciens (strain CN-32 / ATCC BAA-453).